The sequence spans 293 residues: uncharacterized protein (293 aa).

2 disordered regions span residues 1 to 23 (MGWPPAQKPEDSKEEHGGPAQTD) and 52 to 83 (ELQSYSHTSESPVETKTPTTSSEEQDEQSELS). Over residues 8 to 17 (KPEDSKEEHG) the composition is skewed to basic and acidic residues. Residues 52-71 (ELQSYSHTSESPVETKTPTT) are compositionally biased toward polar residues.

This is an uncharacterized protein from Mus musculus (Mouse).